The following is a 75-amino-acid chain: MNKFKRSSRRRLPPIRSGEIIDYKNTSLLRRFISEQGKILSRRMNKLTSKQQRLVTVAIKRARILALLPFLNNES.

The protein belongs to the bacterial ribosomal protein bS18 family. As to quaternary structure, part of the 30S ribosomal subunit.

It localises to the plastid. It is found in the chloroplast. The protein is Small ribosomal subunit protein bS18c (rps18) of Anthoceros angustus (Hornwort).